We begin with the raw amino-acid sequence, 426 residues long: Histidine--tRNA ligase (426 aa).

Belongs to the class-II aminoacyl-tRNA synthetase family. Homodimer.

It is found in the cytoplasm. It catalyses the reaction tRNA(His) + L-histidine + ATP = L-histidyl-tRNA(His) + AMP + diphosphate + H(+). This is Histidine--tRNA ligase from Prochlorococcus marinus (strain MIT 9301).